We begin with the raw amino-acid sequence, 214 residues long: Ribosomal RNA large subunit methyltransferase E (214 aa).

The S-adenosyl-L-methionine site is built by Gly60, Trp62, Asp86, Asp102, and Asp127. Residue Lys167 is the Proton acceptor of the active site.

The protein belongs to the class I-like SAM-binding methyltransferase superfamily. RNA methyltransferase RlmE family.

The protein localises to the cytoplasm. It catalyses the reaction uridine(2552) in 23S rRNA + S-adenosyl-L-methionine = 2'-O-methyluridine(2552) in 23S rRNA + S-adenosyl-L-homocysteine + H(+). Specifically methylates the uridine in position 2552 of 23S rRNA at the 2'-O position of the ribose in the fully assembled 50S ribosomal subunit. The protein is Ribosomal RNA large subunit methyltransferase E of Herminiimonas arsenicoxydans.